A 260-amino-acid chain; its full sequence is Carbonic anhydrase 2 (260 aa).

N-acetylserine is present on serine 2. The residue at position 2 (serine 2) is a Phosphoserine. The region spanning 3–259 (HHWGYSKHNG…LKNRKIKASF (257 aa)) is the Alpha-carbonic anhydrase domain. Residue histidine 64 is the Proton acceptor of the active site. The active site involves asparagine 67. The residue at position 87 (serine 87) is a Phosphoserine. Zn(2+) contacts are provided by histidine 94, histidine 96, and histidine 119. Tyrosine 127 is a catalytic residue. Serine 165 carries the phosphoserine modification. Residue 198–199 (TT) coordinates substrate.

This sequence belongs to the alpha-carbonic anhydrase family. Interacts with SLC4A4. Interaction with SLC4A7 regulates SLC4A7 transporter activity. Interacts with SLC26A6. Zn(2+) serves as cofactor.

It is found in the cytoplasm. The protein localises to the cell membrane. The enzyme catalyses hydrogencarbonate + H(+) = CO2 + H2O. It catalyses the reaction urea = cyanamide + H2O. Its activity is regulated as follows. Inhibited by acetazolamide. In terms of biological role, catalyzes the reversible hydration of carbon dioxide. Can also hydrate cyanamide to urea. Involved in the regulation of fluid secretion into the anterior chamber of the eye. Essential for bone resorption and osteoclast differentiation. Contributes to intracellular pH regulation in the duodenal upper villous epithelium during proton-coupled peptide absorption. Stimulates the chloride-bicarbonate exchange activity of SLC26A6. In Mus musculus (Mouse), this protein is Carbonic anhydrase 2 (Ca2).